The chain runs to 104 residues: Holotricin-3 (104 aa).

An N-terminal signal peptide occupies residues 1–20 (MNKLIILGLACIIAVASAMP). The tract at residues 22-104 (GPGDGHGGGH…HHGGYQTHGY (83 aa)) is disordered. Residues 23–97 (PGDGHGGGHG…PGGHGGGHHG (75 aa)) are compositionally biased toward gly residues. Repeat copies occupy residues 27-30 (HGGG), 31-34 (HGGG), 35-38 (HGGG), 39-42 (HGNG), 43-46 (QGGG), 47-50 (HGHG), 51-54 (PGGG), 55-58 (FGGG), 59-62 (HGGG), 63-66 (HGGG), 67-70 (GRGG), 71-74 (GGSG), 75-78 (GGGS), 79-82 (PGHG), 83-86 (AGGG), 87-90 (YPGG), 91-94 (HGGG), and 96-98 (HGG). The tract at residues 27–98 (HGGGHGGGHG…GGHGGGHHGG (72 aa)) is 18 X 4 AA approximate tandem repeats of H-G-G-G.

This sequence to T.molitor tenecin 3.

The protein localises to the secreted. Its function is as follows. Has antifungal activity against C.albicans. This Holotrichia diomphalia (Korean black chafer) protein is Holotricin-3.